The following is a 228-amino-acid chain: Hematopoietically-expressed homeobox protein hhex (228 aa).

Residues 117 to 176 (RKGGQVRFSNDQTIELEKKFETQKYLSPPERKRLAKMLQLSERQVKTWFQNRRAKWRRLK) constitute a DNA-binding region (homeobox). The segment at 175 to 228 (LKQENPPSTGKREAEDSDTRRLSDAAARARELESGASTDSEELLDIEDEHQFTL) is disordered. Basic and acidic residues predominate over residues 184 to 207 (GKREAEDSDTRRLSDAAARARELE). Residues 213-222 (DSEELLDIED) are compositionally biased toward acidic residues.

Expressed in embryonic endothelial and blood lineages. From late-blastula stage, expression is restricted to the dorsal marginal region of the extraembryonic yolk syncytial layer (YSL). By the onset of gastrulation, expressed in the entire dorsal half of the YSL. Post-gastrulation, expression appears in both anterior and posterior lateral plate mesoderm by the 3-somite stage. Posteriorly, expression is in the intermediate cell mass (ICM), which contains both endothelial and blood precursors. Subsequently expressed in the developing endothelial cells including the endocardium until the onset of circulation (24 hpf) and disappears completely by 30 hpf, at which point expression is seen in the thyroid and liver primordia. Also expressed in the developing biliary tree and pancreas.

The protein localises to the nucleus. Recognizes the DNA sequence 5'-ATTAA-3'. Transcriptional repressor. Regulates the differentiation of both endothelial and blood cells. Plays a role in embryonic dorsoventral patterning by regulating bmp expression. May establish anterior identity. Functions in the embryo to regulate liver development. Functions extraembryonically to generate organ chirality. The protein is Hematopoietically-expressed homeobox protein hhex of Danio rerio (Zebrafish).